The sequence spans 150 residues: Transcriptional repressor NrdR (150 aa).

Positions 1–22 are disordered; that stretch reads MKCPYCSAPDSRVVNSRPSDDG. Residues 3 to 34 fold into a zinc finger; it reads CPYCSAPDSRVVNSRPSDDGASIRRRRECLRC. The ATP-cone domain maps to 49–136; that stretch reads LMVLKRGGQR…VYRDFDSLER (88 aa).

Belongs to the NrdR family. The cofactor is Zn(2+).

Functionally, negatively regulates transcription of bacterial ribonucleotide reductase nrd genes and operons by binding to NrdR-boxes. The polypeptide is Transcriptional repressor NrdR (Deinococcus geothermalis (strain DSM 11300 / CIP 105573 / AG-3a)).